The chain runs to 159 residues: Probable inactive acireductone dioxygenase 2 (159 aa).

It belongs to the acireductone dioxygenase (ARD) family.

The protein localises to the cytoplasm. The protein resides in the nucleus. Probable inactive acireductone dioxygenase. The protein is Probable inactive acireductone dioxygenase 2 of Caenorhabditis briggsae.